The chain runs to 346 residues: F(420)H(2) dehydrogenase subunit F (346 aa).

2 4Fe-4S ferredoxin-type domains span residues 5 to 34 (IAEV…VKKA) and 46 to 76 (YEKG…ENEL). The [4Fe-4S] cluster site is built by cysteine 14, cysteine 17, cysteine 20, cysteine 24, cysteine 55, cysteine 58, cysteine 61, and cysteine 65.

As to quaternary structure, the FPO complex is composed of at least 13 different subunits. [4Fe-4S] cluster is required as a cofactor. Requires FAD as cofactor.

The protein localises to the membrane. Its subcellular location is the cytoplasm. It carries out the reaction methanophenazine + reduced coenzyme F420-(gamma-L-Glu)(n) = dihydromethanophenazine + oxidized coenzyme F420-(gamma-L-Glu)(n) + H(+). The enzyme catalyses reduced coenzyme F420-(gamma-L-Glu)(n) + 2 oxidized [2Fe-2S]-[ferredoxin] = oxidized coenzyme F420-(gamma-L-Glu)(n) + 2 reduced [2Fe-2S]-[ferredoxin] + 3 H(+). Functionally, component of the F(420)H(2) dehydrogenase (FPO complex) which is part of the energy-conserving F(420)H(2):heterodisulfide oxidoreductase system. The membrane-bound electron transfer system of the complex plays an important role in the metabolism of methylotrophic methanogens when the organisms grow on methanol or methylamines. Catalyzes the oxidation of methanophenazine to dihydromethanophenazine. It shuttles electrons from F(420)H(2), via FAD and iron-sulfur (Fe-S) centers, to methanophenazine (an electron carrier in the membrane). It couples the redox reaction to proton translocation (for every two electrons transferred, two hydrogen ions are translocated across the cytoplasmic membrane), and thus conserves the redox energy in a proton gradient. It also catalyzes the oxidation of F(420)H(2) with quinones such as 2,3-dimethyl-1,4-naphthoquinone, 2-methyl-1,4-naphthoquinone and tetramethyl-p-benzoquinone. Might have a dual function, acting as an electron input module when connected to the membrane integral Fpo complex, or as a soluble single subunit, being involved in the reoxydation of reduced ferredoxin in the cytoplasm. In Methanosarcina mazei (strain ATCC BAA-159 / DSM 3647 / Goe1 / Go1 / JCM 11833 / OCM 88) (Methanosarcina frisia), this protein is F(420)H(2) dehydrogenase subunit F (fpoF).